The primary structure comprises 64 residues: MAKIRQKTKRAAAKRFSITKNGKLKRKHAYRSHLALGRSTKAKRHLRKDAIMSTSDTKRYTQCL.

Belongs to the bacterial ribosomal protein bL35 family.

The polypeptide is Large ribosomal subunit protein bL35 (Ureaplasma urealyticum serovar 10 (strain ATCC 33699 / Western)).